Here is a 316-residue protein sequence, read N- to C-terminus: ATP synthase gamma chain (316 aa).

This sequence belongs to the ATPase gamma chain family. As to quaternary structure, F-type ATPases have 2 components, CF(1) - the catalytic core - and CF(0) - the membrane proton channel. CF(1) has five subunits: alpha(3), beta(3), gamma(1), delta(1), epsilon(1). CF(0) has three main subunits: a, b and c.

It is found in the cellular thylakoid membrane. Produces ATP from ADP in the presence of a proton gradient across the membrane. The gamma chain is believed to be important in regulating ATPase activity and the flow of protons through the CF(0) complex. The protein is ATP synthase gamma chain of Prochlorococcus marinus (strain MIT 9303).